A 148-amino-acid chain; its full sequence is Isotocin-neurophysin IT 2 (148 aa).

An N-terminal signal peptide occupies residues 1–20 (MSGSMSSVFSLLYLLSVCSA). Cysteine 21 and cysteine 26 are oxidised to a cystine. A Glycine amide modification is found at glycine 29. 7 disulfide bridges follow: cysteine 42-cysteine 86, cysteine 45-cysteine 59, cysteine 53-cysteine 76, cysteine 60-cysteine 66, cysteine 93-cysteine 105, cysteine 99-cysteine 117, and cysteine 106-cysteine 111.

Belongs to the vasopressin/oxytocin family.

In terms of biological role, isotocin causes contraction of smooth muscles. This Catostomus commersonii (White sucker) protein is Isotocin-neurophysin IT 2.